A 316-amino-acid chain; its full sequence is Glycine--tRNA ligase alpha subunit (316 aa).

Belongs to the class-II aminoacyl-tRNA synthetase family. Tetramer of two alpha and two beta subunits.

The protein localises to the cytoplasm. The catalysed reaction is tRNA(Gly) + glycine + ATP = glycyl-tRNA(Gly) + AMP + diphosphate. This chain is Glycine--tRNA ligase alpha subunit, found in Cupriavidus taiwanensis (strain DSM 17343 / BCRC 17206 / CCUG 44338 / CIP 107171 / LMG 19424 / R1) (Ralstonia taiwanensis (strain LMG 19424)).